We begin with the raw amino-acid sequence, 110 residues long: UPF0122 protein lmo1802 (110 aa).

It belongs to the UPF0122 family.

Might take part in the signal recognition particle (SRP) pathway. This is inferred from the conservation of its genetic proximity to ftsY/ffh. May be a regulatory protein. The sequence is that of UPF0122 protein lmo1802 from Listeria monocytogenes serovar 1/2a (strain ATCC BAA-679 / EGD-e).